A 184-amino-acid polypeptide reads, in one-letter code: Ribosome maturation factor RimM (184 aa).

The region spanning 101-174 is the PRC barrel domain; it reads PDEYYDHQLV…RVVIADRPGL (74 aa).

The protein belongs to the RimM family. As to quaternary structure, binds ribosomal protein uS19.

It is found in the cytoplasm. In terms of biological role, an accessory protein needed during the final step in the assembly of 30S ribosomal subunit, possibly for assembly of the head region. Essential for efficient processing of 16S rRNA. May be needed both before and after RbfA during the maturation of 16S rRNA. It has affinity for free ribosomal 30S subunits but not for 70S ribosomes. The chain is Ribosome maturation factor RimM from Nocardioides sp. (strain ATCC BAA-499 / JS614).